We begin with the raw amino-acid sequence, 672 residues long: uncharacterized protein (672 aa).

Residues 1 to 10 (MAKSDGDDPL) are compositionally biased toward basic and acidic residues. The tract at residues 1–40 (MAKSDGDDPLRPASPRLRSSRRHSLRYSAYTGGPDPLAPP) is disordered.

This is an uncharacterized protein from Mycobacterium tuberculosis (strain CDC 1551 / Oshkosh).